The sequence spans 394 residues: Phosphoglycerate kinase (394 aa).

Residues 21 to 23 (DFN), Arg-36, 59 to 62 (HLGR), Arg-118, and Arg-151 each bind substrate. Position 183 is a phosphoserine (Ser-183). Lys-201 serves as a coordination point for ATP. At Thr-299 the chain carries Phosphothreonine. ATP-binding positions include Glu-323 and 350–353 (GGDS).

This sequence belongs to the phosphoglycerate kinase family. Monomer.

The protein resides in the cytoplasm. It catalyses the reaction (2R)-3-phosphoglycerate + ATP = (2R)-3-phospho-glyceroyl phosphate + ADP. It functions in the pathway carbohydrate degradation; glycolysis; pyruvate from D-glyceraldehyde 3-phosphate: step 2/5. This Bacillus subtilis (strain 168) protein is Phosphoglycerate kinase (pgk).